Consider the following 211-residue polypeptide: Urease accessory protein UreG (211 aa).

11–18 (GPVGAGKT) provides a ligand contact to GTP.

This sequence belongs to the SIMIBI class G3E GTPase family. UreG subfamily. In terms of assembly, homodimer. UreD, UreF and UreG form a complex that acts as a GTP-hydrolysis-dependent molecular chaperone, activating the urease apoprotein by helping to assemble the nickel containing metallocenter of UreC. The UreE protein probably delivers the nickel.

It localises to the cytoplasm. In terms of biological role, facilitates the functional incorporation of the urease nickel metallocenter. This process requires GTP hydrolysis, probably effectuated by UreG. The protein is Urease accessory protein UreG of Actinobacillus pleuropneumoniae serotype 5b (strain L20).